A 62-amino-acid chain; its full sequence is Conotoxin Im11.9 (62 aa).

The first 22 residues, 1–22 (MFRVTSVLLVIVLLNLVVLTNA), serve as a signal peptide directing secretion. 4 cysteine pairs are disulfide-bonded: Cys-23–Cys-33, Cys-27–Cys-38, Cys-32–Cys-41, and Cys-37–Cys-46. A propeptide spanning residues 23-49 (CHMDCSKMTCCSGICCFYCGRPMCPGT) is cleaved from the precursor.

This sequence belongs to the conotoxin I2 superfamily. In terms of tissue distribution, expressed by the venom duct.

It is found in the secreted. Its function is as follows. Probable neurotoxin. The polypeptide is Conotoxin Im11.9 (Conus imperialis (Imperial cone)).